The primary structure comprises 479 residues: Flap endonuclease 1 (479 aa).

Residues 1–106 (MGIKGLTKFI…SELEKRGEKR (106 aa)) are N-domain. Residue Asp34 coordinates Mg(2+). Residues Arg47 and Arg72 each contribute to the DNA site. Mg(2+)-binding residues include Asp88, Glu160, Glu162, Asp181, and Asp183. An I-domain region spans residues 124–266 (EIKKQSGRTV…KTAYNLIKEY (143 aa)). Glu160 provides a ligand contact to DNA. 2 residues coordinate DNA: Gly244 and Asp246. Asp246 is a binding site for Mg(2+). Positions 349–357 (TQRRLDTFF) are interaction with PCNA. The disordered stretch occupies residues 379 to 455 (AKGKGKKREL…NSDSGNIKNE (77 aa)). Positions 403 to 428 (NIKDEKKNTDKMDELKNKSDENFVKD) are enriched in basic and acidic residues.

Belongs to the XPG/RAD2 endonuclease family. FEN1 subfamily. As to quaternary structure, interacts with PCNA. Three molecules of FEN1 bind to one PCNA trimer with each molecule binding to one PCNA monomer. PCNA stimulates the nuclease activity without altering cleavage specificity. It depends on Mg(2+) as a cofactor. Post-translationally, phosphorylated. Phosphorylation upon DNA damage induces relocalization to the nuclear plasma.

The protein localises to the nucleus. It is found in the nucleolus. The protein resides in the nucleoplasm. It localises to the mitochondrion. Its function is as follows. Structure-specific nuclease with 5'-flap endonuclease and 5'-3' exonuclease activities involved in DNA replication and repair. During DNA replication, cleaves the 5'-overhanging flap structure that is generated by displacement synthesis when DNA polymerase encounters the 5'-end of a downstream Okazaki fragment. It enters the flap from the 5'-end and then tracks to cleave the flap base, leaving a nick for ligation. Also involved in the long patch base excision repair (LP-BER) pathway, by cleaving within the apurinic/apyrimidinic (AP) site-terminated flap. Acts as a genome stabilization factor that prevents flaps from equilibrating into structures that lead to duplications and deletions. Also possesses 5'-3' exonuclease activity on nicked or gapped double-stranded DNA, and exhibits RNase H activity. Also involved in replication and repair of rDNA and in repairing mitochondrial DNA. In Plasmodium chabaudi chabaudi, this protein is Flap endonuclease 1.